Consider the following 444-residue polypeptide: Glutamyl-tRNA reductase (444 aa).

Residues 49 to 52, Ser-109, 114 to 116, and Gln-120 contribute to the substrate site; these read TCNR and ETQ. The active-site Nucleophile is the Cys-50. Residue 189–194 coordinates NADP(+); the sequence is GAGKMG.

Belongs to the glutamyl-tRNA reductase family. Homodimer.

The catalysed reaction is (S)-4-amino-5-oxopentanoate + tRNA(Glu) + NADP(+) = L-glutamyl-tRNA(Glu) + NADPH + H(+). It participates in porphyrin-containing compound metabolism; protoporphyrin-IX biosynthesis; 5-aminolevulinate from L-glutamyl-tRNA(Glu): step 1/2. Its function is as follows. Catalyzes the NADPH-dependent reduction of glutamyl-tRNA(Glu) to glutamate 1-semialdehyde (GSA). This is Glutamyl-tRNA reductase from Bacillus cereus (strain ATCC 10987 / NRS 248).